A 687-amino-acid polypeptide reads, in one-letter code: Hemin receptor (687 aa).

The N-terminal stretch at Met1–Ala28 is a signal peptide. The short motif at Asp44–Thr51 is the TonB box element. One can recognise a TBDR plug domain in the interval Ser56–Val167. Positions Asn178–Trp687 constitute a TBDR beta-barrel domain. Positions Ala319–Leu338 are disordered. The span at Glu326–Leu338 shows a compositional bias: basic and acidic residues. The TonB C-terminal box signature appears at Gln670–Trp687.

This sequence belongs to the TonB-dependent receptor family.

The protein localises to the cell outer membrane. In terms of biological role, this protein is involved in the initial step of iron uptake by binding hemin, an iron chelatin siderophore that allows the bacteria to extract iron from the environment. The sequence is that of Hemin receptor (hemR) from Yersinia enterocolitica.